A 1948-amino-acid polypeptide reads, in one-letter code: Receptor-type tyrosine-protein phosphatase S (1948 aa).

The first 29 residues, 1–29, serve as a signal peptide directing secretion; that stretch reads MAPTWGPGMVSVVGPMGLLVVLLVGGCAA. Residues 30–1282 lie on the Extracellular side of the membrane; sequence EEPPRFIKEP…PQPIVDGEEG (1253 aa). Ig-like C2-type domains are found at residues 33–123, 135–233, and 245–327; these read PRFI…AKLT, PNID…ANLY, and PRFS…AQIT. 2 disulfides stabilise this stretch: Cys54/Cys107 and Cys156/Cys216. Residues 68–72 are important for binding to glycosaminoglycan chains; it reads KKGKK. N-linked (GlcNAc...) asparagine glycosylation is found at Asn263 and Asn308. The cysteines at positions 266 and 311 are disulfide-linked. Fibronectin type-III domains are found at residues 334 to 424, 429 to 523, 527 to 616, 621 to 718, 723 to 831, 832 to 930, 931 to 1033, and 1036 to 1120; these read APGT…TGEQ, APRN…TQQG, QPMN…TLQS, PPQD…TDED, PPRK…TKGA, VLGR…TPRG, HPQI…FLRD, and SPKN…TAFN. The segment at 700-724 is disordered; sequence TEVGPGPESSPVVVRTDEDVPSAPP. The segment covering 701–713 has biased composition (low complexity); the sequence is EVGPGPESSPVVV. Residue Asn733 is glycosylated (N-linked (GlcNAc...) asparagine). N-linked (GlcNAc...) asparagine glycosylation is present at Asn940. A helical transmembrane segment spans residues 1283-1303; sequence LIWVIGPVLAVVFIICIVIAI. The Cytoplasmic portion of the chain corresponds to 1304–1948; sequence LLYKNKPDSK…YLGSFDHYAT (645 aa). 2 stretches are compositionally biased toward basic and acidic residues: residues 1311 to 1321 and 1331 to 1340; these read DSKRKDSEPRT and APHHPKDPVE. Residues 1311–1340 are disordered; that stretch reads DSKRKDSEPRTKCLLNNADLAPHHPKDPVE. Tyrosine-protein phosphatase domains lie at 1393-1648 and 1680-1939; these read LSQE…LLEA and MELE…ALEY. Substrate-binding positions include Asp1557, 1589–1595, and Gln1633; that span reads CSAGVGR. Cys1589 acts as the Phosphocysteine intermediate in catalysis. The Phosphocysteine intermediate role is filled by Cys1880.

This sequence belongs to the protein-tyrosine phosphatase family. Receptor class 2A subfamily. In terms of assembly, binding to large heparan sulfate proteoglycan structures promotes oligomerization. Binding to chondroitin sulfate proteoglycan does not lead to oligomerization. Interacts (via Ig-like domains) with NTRK3. Interacts (via Ig-like domains) with NTRK1, but does not form detectable complexes with NTRK2. Interacts with PPFIA1, PPFIA2 and PPFIA3. A cleavage occurs, separating the extracellular domain from the transmembrane segment. This process called 'ectodomain shedding' is thought to be involved in receptor desensitization, signal transduction and/or membrane localization. Detected in peripheral blood plasmacytoid dendritic cells (at protein level). Detected in all tissues tested except for placenta and liver. Detected in peripheral blood plasmacytoid dendritic cells.

The protein resides in the cell membrane. The protein localises to the cell projection. It localises to the axon. It is found in the perikaryon. Its subcellular location is the cytoplasmic vesicle. The protein resides in the secretory vesicle. The protein localises to the synaptic vesicle membrane. It localises to the synapse. It is found in the synaptosome. Its subcellular location is the postsynaptic density. The protein resides in the neuron projection. The protein localises to the growth cone. It catalyses the reaction O-phospho-L-tyrosyl-[protein] + H2O = L-tyrosyl-[protein] + phosphate. Functionally, cell surface receptor that binds to glycosaminoglycans, including chondroitin sulfate proteoglycans and heparan sulfate proteoglycan. Binding to chondroitin sulfate and heparan sulfate proteoglycans has opposite effects on PTPRS oligomerization and regulation of neurite outgrowth. Contributes to the inhibition of neurite and axonal outgrowth by chondroitin sulfate proteoglycans, also after nerve transection. Plays a role in stimulating neurite outgrowth in response to the heparan sulfate proteoglycan GPC2. Required for normal brain development, especially for normal development of the pituitary gland and the olfactory bulb. Functions as a tyrosine phosphatase. Mediates dephosphorylation of NTRK1, NTRK2 and NTRK3. Plays a role in down-regulation of signaling cascades that lead to the activation of Akt and MAP kinases. Down-regulates TLR9-mediated activation of NF-kappa-B, as well as production of TNF, interferon alpha and interferon beta. The polypeptide is Receptor-type tyrosine-protein phosphatase S (PTPRS) (Homo sapiens (Human)).